Consider the following 381-residue polypeptide: MDVTFLTKNVQINGTQFKILLQNGQGECALIALANVLLISPAHARYAQEISRLVRGKETVTLNELVQTLADMGVQNPNGTDVDKQQLLQILPQLYSGLNINPEFNGSFEDGVEMSIFRLYNVGIVHGWIIDGDNDPNSYEHVSKYSYMGAQKVLVQSYEIQKNNAQFENSEQIQSDAPYLKSFLARSATQLTEYGLTHLREILVERSYAVLFRNDHFCTLYKNNGELFTLVTDPTYRNRKDINWQSLKSVNGSQDSYYTGNFIPTSLERTETTATGQNESYISNPFSDQNTGHVTSNQVNSGASGVQQIEDDEELARRLQEQEDMRAANNMQNGYANNGRNHQRERFERPEKNSKKNKFLPFNGSNKEKKRDKLKKNCVIM.

The span at 331–340 (MQNGYANNGR) shows a compositional bias: polar residues. Residues 331–381 (MQNGYANNGRNHQRERFERPEKNSKKNKFLPFNGSNKEKKRDKLKKNCVIM) form a disordered region. Over residues 342–354 (HQRERFERPEKNS) the composition is skewed to basic and acidic residues. The span at 372 to 381 (DKLKKNCVIM) shows a compositional bias: basic residues.

It is found in the cytoplasm. It localises to the nucleus. This is an uncharacterized protein from Saccharomyces cerevisiae (strain ATCC 204508 / S288c) (Baker's yeast).